A 144-amino-acid chain; its full sequence is Histone H2B.2, sperm (144 aa).

The tract at residues 1-51 is disordered; the sequence is MPRSPSKTSPRKGSPRRGSPSRKASPKRGGKGAKRAGKGGRRRNVVRRRRR. Short sequence motifs (SPKK motif) lie at residues 4-7, 9-12, 14-17, 19-22, and 25-28; these read SPSK, SPRK, SPRR, SPSR, and SPKR. 3 positions are modified to phosphoserine: Ser14, Ser19, and Ser25. Residues 24 to 51 show a composition bias toward basic residues; it reads ASPKRGGKGAKRAGKGGRRRNVVRRRRR. O-linked (GlcNAc) serine glycosylation is present at Ser131. A Glycyl lysine isopeptide (Lys-Gly) (interchain with G-Cter in ubiquitin) cross-link involves residue Lys139.

The protein belongs to the histone H2B family. As to quaternary structure, the nucleosome is a histone octamer containing two molecules each of H2A, H2B, H3 and H4 assembled in one H3-H4 heterotetramer and two H2A-H2B heterodimers. The octamer wraps approximately 147 bp of DNA. In terms of processing, monoubiquitination of Lys-139 gives a specific tag for epigenetic transcriptional activation and is also prerequisite for histone H3 'Lys-4' and 'Lys-79' methylation. Phosphorylated on SPKK motifs 3, 4 and 5; which may regulate DNA binding. Dephosphorylated during maturation of spermatids to mature sperm and rephosphorylated at fertilization. Post-translationally, glcNAcylation at Ser-131 promotes monoubiquitination of Lys-139. It fluctuates in response to extracellular glucose, and associates with transcribed genes.

The protein resides in the nucleus. The protein localises to the chromosome. Functionally, core component of nucleosome. Nucleosomes wrap and compact DNA into chromatin, limiting DNA accessibility to the cellular machineries which require DNA as a template. Histones thereby play a central role in transcription regulation, DNA repair, DNA replication and chromosomal stability. DNA accessibility is regulated via a complex set of post-translational modifications of histones, also called histone code, and nucleosome remodeling. The chain is Histone H2B.2, sperm from Strongylocentrotus purpuratus (Purple sea urchin).